The primary structure comprises 1089 residues: MEVTSTTFISTTRSSKYLTLTSYSPVILPASTLRRDFLGCCHSLRPSPHLRTRAGKRNSRRSSIRSPRLVVRASIDSGLILIVVAVTAFSAIAFAYCQSTFRKRKSSDEVATVHGGKNSAENRREIHGDIHEGNPVEINVGFRKVEEESVNLLEEEKAHQIHEVAVMDYDSVSAEDSQFAVASVTTVATAHTLIDESFSSSIVNGSVALESATFGVKTPEKQVGNSEDQKGLEHDFSQAVVGIHSIASPQVVDDTRALEYEYNGLLQKPLEYSIFAESKREEIHTFYGSNHSSAKSSRLPSLKAVSPAVTSATNSLFLDHKNNGVIDTQFPGQSSGQATGDVQEENLVAHSNGGVSHIRKDVKGDWKFPSDGKHVGHQIDESMPQFPARNFELHNSNGRSPETSDAYNRLLRDGRIKDCISLLEDLDQRDLLDMDKIYHASFFKACKKQRAVKEAFRFTKLILNPTMSTFNMLMSVCASSQDIEGARGVLRLVQESGMTADCKLYTTLISSCAKSGKVDAMFEVFHQMSNSGVEANLHTFGALIDGCARAGQVAKAFGAYGILRSKNVKPDRVVFNALISACGQSGAVDRAFDVLAEMKAETHPIDPDHISIGALMKACCNAGQVERAKEVYQMIHKYGIRGTPEVYTIAVNSCSKSGDWDFACSIYKDMKEKDVTPDEVFFSALIDVAGHAKMLDEAFGILQDAKSQGIRLGTISYSSLMGACCNAKDWKKALELYEKIKSIKLRPTISTMNALITALCEGNQLPKAMEYLDEIKTLGLKPNTITYSMLMLASERKDDFEVSFKLLSQAKGDGVSPNLIMCRCITSLCKRRFEKACAGGEPVVSFKSGRPQIENKWTSMALMVYRETISGGTVPTTEVVSQVLGCLQLPHDAALRDRLISTLGINISSQKQHNIFPLVDGFGEYDPRAFSLLEEATSLGVLPSVSFNKIPLFFDTTELPKNVAEVYLLTIFKGLKHRLAAGAKIPHINLIISIQEKEIRTPEGEKTIDLTGRVGQEIGALLRRLDIPYHRKDSRLRINGVSLKNWFQPKLDSPFSGGKPGDLRSSQVPLGNQISRQQRSIRLGNLSLE.

The transit peptide at 1-72 (MEVTSTTFIS…SIRSPRLVVR (72 aa)) directs the protein to the chloroplast. 10 PPR repeats span residues 466-500 (TMST…GMTA), 501-535 (DCKL…GVEA), 536-570 (NLHT…NVKP), 571-605 (DRVV…THPI), 608-642 (DHIS…GIRG), 643-677 (TPEV…DVTP), 678-712 (DEVF…GIRL), 713-747 (GTIS…KLRP), 748-782 (TIST…GLKP), and 783-817 (NTIT…GVSP).

Belongs to the PPR family. P subfamily. Expressed in stems, leaves and sepals.

The protein localises to the plastid. It is found in the chloroplast. Its function is as follows. Regulator of the large subunit (LS) of RuBisCO. Involved either in the processing or in the stabilization of the processed transcript, probably by acting as a barrier to the 5'&gt;3' degradation. The sequence is that of Pentatricopeptide repeat-containing protein MRL1, chloroplastic (MRL1) from Arabidopsis thaliana (Mouse-ear cress).